Consider the following 438-residue polypeptide: Aspartate--tRNA(Asp/Asn) ligase (438 aa).

Glu-176 contributes to the L-aspartate binding site. Positions 198-201 (QLYK) are aspartate. Arg-220 is an L-aspartate binding site. Residues 220 to 222 (RAE), 228 to 230 (RHL), and Glu-361 each bind ATP. Residues Glu-361 and Ser-364 each coordinate Mg(2+). Positions 364 and 368 each coordinate L-aspartate. Position 409 to 412 (409 to 412 (GADR)) interacts with ATP.

It belongs to the class-II aminoacyl-tRNA synthetase family. Type 2 subfamily. Homodimer. Mg(2+) serves as cofactor.

It is found in the cytoplasm. The catalysed reaction is tRNA(Asx) + L-aspartate + ATP = L-aspartyl-tRNA(Asx) + AMP + diphosphate. Aspartyl-tRNA synthetase with relaxed tRNA specificity since it is able to aspartylate not only its cognate tRNA(Asp) but also tRNA(Asn). Reaction proceeds in two steps: L-aspartate is first activated by ATP to form Asp-AMP and then transferred to the acceptor end of tRNA(Asp/Asn). The chain is Aspartate--tRNA(Asp/Asn) ligase from Methanococcus maripaludis (strain C6 / ATCC BAA-1332).